A 317-amino-acid polypeptide reads, in one-letter code: Aspartate carbamoyltransferase catalytic subunit (317 aa).

Carbamoyl phosphate-binding residues include Arg66 and Thr67. Lys94 is an L-aspartate binding site. 3 residues coordinate carbamoyl phosphate: Arg116, His144, and Gln147. Residues Arg177 and Arg231 each contribute to the L-aspartate site. Carbamoyl phosphate contacts are provided by Gly272 and Pro273.

It belongs to the aspartate/ornithine carbamoyltransferase superfamily. ATCase family. As to quaternary structure, heterododecamer (2C3:3R2) of six catalytic PyrB chains organized as two trimers (C3), and six regulatory PyrI chains organized as three dimers (R2).

The enzyme catalyses carbamoyl phosphate + L-aspartate = N-carbamoyl-L-aspartate + phosphate + H(+). Its pathway is pyrimidine metabolism; UMP biosynthesis via de novo pathway; (S)-dihydroorotate from bicarbonate: step 2/3. Functionally, catalyzes the condensation of carbamoyl phosphate and aspartate to form carbamoyl aspartate and inorganic phosphate, the committed step in the de novo pyrimidine nucleotide biosynthesis pathway. The chain is Aspartate carbamoyltransferase catalytic subunit from Bradyrhizobium sp. (strain BTAi1 / ATCC BAA-1182).